Consider the following 380-residue polypeptide: F-box protein At4g18380 (380 aa).

The 49-residue stretch at 22–70 folds into the F-box domain; the sequence is IDHFDNLPDSILLLIFNNIGDVKALGRCSVVSKRFHSLIPQVENVFVRV.

The chain is F-box protein At4g18380 from Arabidopsis thaliana (Mouse-ear cress).